A 534-amino-acid chain; its full sequence is Coiled-coil domain-containing protein 183 (534 aa).

3 coiled-coil regions span residues 10-54 (EEQT…NIRR), 136-209 (DASK…DMKI), and 323-396 (LAQR…HSNM).

This chain is Coiled-coil domain-containing protein 183 (CCDC183), found in Homo sapiens (Human).